Reading from the N-terminus, the 205-residue chain is ATP synthase subunit b (205 aa).

Residues 51–69 (FAWRCLDFAVLLAIVVWAL) traverse the membrane as a helical segment.

The protein belongs to the ATPase B chain family. As to quaternary structure, F-type ATPases have 2 components, F(1) - the catalytic core - and F(0) - the membrane proton channel. F(1) has five subunits: alpha(3), beta(3), gamma(1), delta(1), epsilon(1). F(0) has three main subunits: a(1), b(2) and c(10-14). The alpha and beta chains form an alternating ring which encloses part of the gamma chain. F(1) is attached to F(0) by a central stalk formed by the gamma and epsilon chains, while a peripheral stalk is formed by the delta and b chains.

The protein localises to the cell inner membrane. In terms of biological role, f(1)F(0) ATP synthase produces ATP from ADP in the presence of a proton or sodium gradient. F-type ATPases consist of two structural domains, F(1) containing the extramembraneous catalytic core and F(0) containing the membrane proton channel, linked together by a central stalk and a peripheral stalk. During catalysis, ATP synthesis in the catalytic domain of F(1) is coupled via a rotary mechanism of the central stalk subunits to proton translocation. Its function is as follows. Component of the F(0) channel, it forms part of the peripheral stalk, linking F(1) to F(0). In Geotalea uraniireducens (strain Rf4) (Geobacter uraniireducens), this protein is ATP synthase subunit b.